Consider the following 235-residue polypeptide: Small ribosomal subunit protein eS4 (235 aa).

The region spanning 43–114 (IPLLLIVRDM…DPHRFLRLIE (72 aa)) is the S4 RNA-binding domain.

Belongs to the eukaryotic ribosomal protein eS4 family.

The sequence is that of Small ribosomal subunit protein eS4 from Korarchaeum cryptofilum (strain OPF8).